A 156-amino-acid polypeptide reads, in one-letter code: dCTP deaminase (156 aa).

Residues 79–84 (RSSLAR), Asp95, Gln124, and Tyr138 each bind dCTP.

It belongs to the dCTP deaminase family. In terms of assembly, homotrimer.

The enzyme catalyses dCTP + H2O + H(+) = dUTP + NH4(+). Its pathway is pyrimidine metabolism; dUMP biosynthesis; dUMP from dCTP (dUTP route): step 1/2. Functionally, catalyzes the deamination of dCTP to dUTP. The chain is dCTP deaminase from Pyrococcus horikoshii (strain ATCC 700860 / DSM 12428 / JCM 9974 / NBRC 100139 / OT-3).